We begin with the raw amino-acid sequence, 372 residues long: MTRYCAATRCKNRGGQAAVIQRKVSFYPFPLHDRGRLQEWLRNMKQYKLYPTKHQVLCSDHFTADSFNIRWGIQYLKPNAIPTLFSFTEKIQDIAELELTIKEGTQDGVKVDTDTVPSQDFCPNVTNNLSHGFDTDEYVDPDDKQVYLKNTIDGITVSQNKTKDLYVPNSEYEIQPHLITPSKFRQTSVENMIVSSVADLNSQSNQVYFELQTDQNYVAENVDTFQVDHFSDVQKETFPLSLVKQTKQMDAEKDSVITIIVPGGQDGSAISDNLQFTSSEKLGFENDANSTNEILESEHSYCRQITDRHYLRQKIAKLQSKIAVLEAQENATLSRLRLLESVIAKLKQENLLSDEKLKILENCGSSVDIVIV.

The THAP-type zinc-finger motif lies at 1-85; the sequence is MTRYCAATRC…LKPNAIPTLF (85 aa). The stretch at 306-362 forms a coiled coil; the sequence is TDRHYLRQKIAKLQSKIAVLEAQENATLSRLRLLESVIAKLKQENLLSDEKLKILEN.

Its subcellular location is the nucleus. In Xenopus laevis (African clawed frog), this protein is THAP domain-containing protein 5 (thap5).